Reading from the N-terminus, the 402-residue chain is 3-dehydroquinate synthase (402 aa).

It belongs to the archaeal-type DHQ synthase family.

The catalysed reaction is 2-amino-2,3,7-trideoxy-D-lyxo-hept-6-ulosonate + NAD(+) + H2O = 3-dehydroquinate + NH4(+) + NADH + H(+). Catalyzes the oxidative deamination and cyclization of 2-amino-3,7-dideoxy-D-threo-hept-6-ulosonic acid (ADH) to yield 3-dehydroquinate (DHQ), which is fed into the canonical shikimic pathway of aromatic amino acid biosynthesis. This chain is 3-dehydroquinate synthase, found in Methanopyrus kandleri (strain AV19 / DSM 6324 / JCM 9639 / NBRC 100938).